The following is a 342-amino-acid chain: Protein-ribulosamine 3-kinase, chloroplastic (342 aa).

A chloroplast-targeting transit peptide spans 1–46 (MANVALLSAASPSTSSAAPRLRHVARRRPSRRSACPRSAASRLSIM). Position 141–143 (141–143 (EFI)) interacts with ATP. D246 acts as the Proton acceptor in catalysis.

Belongs to the fructosamine kinase family.

The protein localises to the plastid. It localises to the chloroplast. The catalysed reaction is N(6)-D-ribulosyl-L-lysyl-[protein] + ATP = N(6)-(3-O-phospho-D-ribulosyl)-L-lysyl-[protein] + ADP + H(+). It carries out the reaction N(6)-(D-erythrulosyl)-L-lysyl-[protein] + ATP = N(6)-(3-O-phospho-D-erythrulosyl)-L-lysyl-[protein] + ADP + H(+). Its function is as follows. Initiates a process leading to the deglycation of proteins. Phosphorylates low-molecular-mass and protein-bound erythrulosamines and ribulosamines, but not fructosamines or psicosamines, on the third carbon of the sugar moiety. Protein-bound erythrulosamine 3-phosphates and ribulosamine 3-phosphates are unstable and decompose under physiological conditions. The polypeptide is Protein-ribulosamine 3-kinase, chloroplastic (Oryza sativa subsp. japonica (Rice)).